Reading from the N-terminus, the 184-residue chain is Photosystem I assembly protein Ycf4 (184 aa).

Transmembrane regions (helical) follow at residues 19-39 (ISNFCWAFILFLGSLGFLLVG) and 57-77 (IVFFPQGIVMSFYGIAGLFIS).

This sequence belongs to the Ycf4 family.

Its subcellular location is the plastid. The protein localises to the chloroplast thylakoid membrane. Seems to be required for the assembly of the photosystem I complex. The polypeptide is Photosystem I assembly protein Ycf4 (Nicotiana tomentosiformis (Tobacco)).